We begin with the raw amino-acid sequence, 494 residues long: Alpha-amylase-related protein (494 aa).

Positions M1–A20 are cleaved as a signal peptide. Pyrrolidone carboxylic acid is present on Q21. An intrachain disulfide couples C48 to C104. Residues N118, Q169, and D178 each contribute to the Ca(2+) site. C157 and C171 form a disulfide bridge. R206 provides a ligand contact to chloride. The Nucleophile role is filled by D208. Residue H212 participates in Ca(2+) binding. E245 serves as the catalytic Proton donor. Positions 308 and 343 each coordinate chloride. 3 disulfide bridges follow: C376–C382, C418–C441, and C448–C460.

It belongs to the glycosyl hydrolase 13 family. As to quaternary structure, monomer. Requires Ca(2+) as cofactor. Chloride serves as cofactor.

It is found in the secreted. The enzyme catalyses Endohydrolysis of (1-&gt;4)-alpha-D-glucosidic linkages in polysaccharides containing three or more (1-&gt;4)-alpha-linked D-glucose units.. In Drosophila atripex (Fruit fly), this protein is Alpha-amylase-related protein (Amyrel).